We begin with the raw amino-acid sequence, 351 residues long: Phospho-N-acetylmuramoyl-pentapeptide-transferase (351 aa).

10 helical membrane passes run 17–37 (TAYA…FIIL), 63–83 (IPTM…FFWI), 85–105 (FWNI…CLGF), 124–144 (FKIY…YYFG), 158–178 (SLKL…LISA), 190–210 (GLAI…AYLA), 230–250 (LVVF…FNAY), 254–274 (IMMG…TALI), 279–299 (ILFA…IIQV), and 328–348 (QVVI…LSTL).

The protein belongs to the glycosyltransferase 4 family. MraY subfamily. Requires Mg(2+) as cofactor.

Its subcellular location is the cell inner membrane. The catalysed reaction is UDP-N-acetyl-alpha-D-muramoyl-L-alanyl-gamma-D-glutamyl-meso-2,6-diaminopimeloyl-D-alanyl-D-alanine + di-trans,octa-cis-undecaprenyl phosphate = di-trans,octa-cis-undecaprenyl diphospho-N-acetyl-alpha-D-muramoyl-L-alanyl-D-glutamyl-meso-2,6-diaminopimeloyl-D-alanyl-D-alanine + UMP. It participates in cell wall biogenesis; peptidoglycan biosynthesis. Its function is as follows. Catalyzes the initial step of the lipid cycle reactions in the biosynthesis of the cell wall peptidoglycan: transfers peptidoglycan precursor phospho-MurNAc-pentapeptide from UDP-MurNAc-pentapeptide onto the lipid carrier undecaprenyl phosphate, yielding undecaprenyl-pyrophosphoryl-MurNAc-pentapeptide, known as lipid I. The chain is Phospho-N-acetylmuramoyl-pentapeptide-transferase from Borrelia turicatae (strain 91E135).